We begin with the raw amino-acid sequence, 775 residues long: 5-methyltetrahydropteroyltriglutamate--homocysteine methyltransferase (775 aa).

5-methyltetrahydropteroyltri-L-glutamate-binding positions include 16 to 19 and K115; that span reads REMK. L-homocysteine-binding positions include 435–437 and E488; that span reads IGS. Residues 435-437 and E488 each bind L-methionine; that span reads IGS. Residues 519-520 and W565 contribute to the 5-methyltetrahydropteroyltri-L-glutamate site; that span reads RC. D603 is an L-homocysteine binding site. D603 is an L-methionine binding site. E609 serves as a coordination point for 5-methyltetrahydropteroyltri-L-glutamate. The Zn(2+) site is built by H645, C647, and E669. H698 acts as the Proton donor in catalysis. C730 contributes to the Zn(2+) binding site.

Belongs to the vitamin-B12 independent methionine synthase family. Zn(2+) is required as a cofactor.

It catalyses the reaction 5-methyltetrahydropteroyltri-L-glutamate + L-homocysteine = tetrahydropteroyltri-L-glutamate + L-methionine. It functions in the pathway amino-acid biosynthesis; L-methionine biosynthesis via de novo pathway; L-methionine from L-homocysteine (MetE route): step 1/1. Its function is as follows. Catalyzes the transfer of a methyl group from 5-methyltetrahydrofolate to homocysteine resulting in methionine formation. The chain is 5-methyltetrahydropteroyltriglutamate--homocysteine methyltransferase from Coxiella burnetii (strain RSA 331 / Henzerling II).